The primary structure comprises 361 residues: Chorismate synthase (361 aa).

Arginine 48 provides a ligand contact to NADP(+). Residues arginine 126 to serine 128, glycine 286, lysine 301 to serine 305, and arginine 328 contribute to the FMN site.

This sequence belongs to the chorismate synthase family. Requires FMNH2 as cofactor.

The catalysed reaction is 5-O-(1-carboxyvinyl)-3-phosphoshikimate = chorismate + phosphate. Its pathway is metabolic intermediate biosynthesis; chorismate biosynthesis; chorismate from D-erythrose 4-phosphate and phosphoenolpyruvate: step 7/7. Catalyzes the anti-1,4-elimination of the C-3 phosphate and the C-6 proR hydrogen from 5-enolpyruvylshikimate-3-phosphate (EPSP) to yield chorismate, which is the branch point compound that serves as the starting substrate for the three terminal pathways of aromatic amino acid biosynthesis. This reaction introduces a second double bond into the aromatic ring system. In Korarchaeum cryptofilum (strain OPF8), this protein is Chorismate synthase.